We begin with the raw amino-acid sequence, 356 residues long: MRVVVAGGGTAGHIEPALAVAEALRDKHGATVSALGTARGLETTLVPDRGFELHLIEPVPVPRKPNMDLLKLPFRVAKALGQARKALKDTDAQAVIGFGGYVSAPAYMAAKSLGLPFFVHEANARAGMANKLGVKLGGVGLNAVAGSGMEGDVVGIPIRAVLSGARDESAADRARDTWGLDKDRQTIFVTGGSQGSVSINKAVEQAVDQLVEAGFQVLHAVGKKNELPAAKPGYHPVPFIDDMQAAYTVADLIVCRSGAMTVAEVTAAGVPAIYVPLPHGNGEQALNAQAVIKAGAARQIDDADFTAQTLIDATLDILLHPSTHQSMSDAAKTSTAGNASTVIADMIAATIKSQHN.

Residues 10-12 (TAG), asparagine 123, arginine 159, serine 193, isoleucine 240, and glutamine 284 each bind UDP-N-acetyl-alpha-D-glucosamine.

This sequence belongs to the glycosyltransferase 28 family. MurG subfamily.

It localises to the cell membrane. The catalysed reaction is di-trans,octa-cis-undecaprenyl diphospho-N-acetyl-alpha-D-muramoyl-L-alanyl-D-glutamyl-meso-2,6-diaminopimeloyl-D-alanyl-D-alanine + UDP-N-acetyl-alpha-D-glucosamine = di-trans,octa-cis-undecaprenyl diphospho-[N-acetyl-alpha-D-glucosaminyl-(1-&gt;4)]-N-acetyl-alpha-D-muramoyl-L-alanyl-D-glutamyl-meso-2,6-diaminopimeloyl-D-alanyl-D-alanine + UDP + H(+). It functions in the pathway cell wall biogenesis; peptidoglycan biosynthesis. Its function is as follows. Cell wall formation. Catalyzes the transfer of a GlcNAc subunit on undecaprenyl-pyrophosphoryl-MurNAc-pentapeptide (lipid intermediate I) to form undecaprenyl-pyrophosphoryl-MurNAc-(pentapeptide)GlcNAc (lipid intermediate II). The sequence is that of UDP-N-acetylglucosamine--N-acetylmuramyl-(pentapeptide) pyrophosphoryl-undecaprenol N-acetylglucosamine transferase from Corynebacterium glutamicum (strain R).